Here is a 500-residue protein sequence, read N- to C-terminus: MDPVLVLVLTLSSLLLLSLWRQSFGRGKLPPGPTPLPIIGNTLQIYMKDIGQSIKKFSKVYGPIFTLYLGMKPFVVLHGYEAVKEALVDLGEEFSGRGSFPVSERVNKGLGVIFSNGMQWKEIRRFSIMTLRTFGMGKRTIEDRIQEEAQCLVEELRKSKGAPFDPTFILGCAPCNVICSIIFQNRFDYKDPTFLNLMHRFNENFRLFSSPWLQVCNTFPAIIDYFPGSHNQVLKNFFYIKNYVLEKVKEHQESLDKDNPRDFIDCFLNKMEQEKHNPQSEFTLESLVATVTDMFGAGTETTSTTLRYGLLLLLKHVDVTAKVQEEIERVIGRNRSPCMKDRSQMPYTDAVVHEIQRYIDLVPTNLPHLVTRDIKFRNYFIPKGTNVIVSLSSILHDDKEFPNPEKFDPGHFLDERGNFKKSDYFMPFSAGKRICAGEALARTELFLFFTTILQNFNLKSLVDVKDIDTTPAISGFGHLPPFYEACFIPVQRADSLSSHL.

Residue C435 participates in heme binding.

The protein belongs to the cytochrome P450 family. Requires heme as cofactor. In terms of tissue distribution, liver and kidney; male-specific.

Its subcellular location is the endoplasmic reticulum membrane. It is found in the microsome membrane. It carries out the reaction an organic molecule + reduced [NADPH--hemoprotein reductase] + O2 = an alcohol + oxidized [NADPH--hemoprotein reductase] + H2O + H(+). The enzyme catalyses testosterone + reduced [NADPH--hemoprotein reductase] + O2 = 2alpha,17beta-dihydroxyandrost-4-en-3-one + oxidized [NADPH--hemoprotein reductase] + H2O + H(+). It catalyses the reaction testosterone + reduced [NADPH--hemoprotein reductase] + O2 = 16alpha,17beta-dihydroxyandrost-4-en-3-one + oxidized [NADPH--hemoprotein reductase] + H2O + H(+). The catalysed reaction is (5Z,8Z,11Z,14Z)-eicosatetraenoate + reduced [NADPH--hemoprotein reductase] + O2 = (8R,9S)-epoxy-(5Z,11Z,14Z)-eicosatrienoate + oxidized [NADPH--hemoprotein reductase] + H2O + H(+). It carries out the reaction (5Z,8Z,11Z,14Z)-eicosatetraenoate + reduced [NADPH--hemoprotein reductase] + O2 = (8S,9R)-epoxy-(5Z,11Z,14Z)-eicosatrienoate + oxidized [NADPH--hemoprotein reductase] + H2O + H(+). The enzyme catalyses (5Z,8Z,11Z,14Z)-eicosatetraenoate + reduced [NADPH--hemoprotein reductase] + O2 = (11R,12S)-epoxy-(5Z,8Z,14Z)-eicosatrienoate + oxidized [NADPH--hemoprotein reductase] + H2O + H(+). It catalyses the reaction (5Z,8Z,11Z,14Z)-eicosatetraenoate + reduced [NADPH--hemoprotein reductase] + O2 = (11S,12R)-epoxy-(5Z,8Z,14Z)-eicosatrienoate + oxidized [NADPH--hemoprotein reductase] + H2O + H(+). The catalysed reaction is (5Z,8Z,11Z,14Z)-eicosatetraenoate + reduced [NADPH--hemoprotein reductase] + O2 = (14R,15S)-epoxy-(5Z,8Z,11Z)-eicosatrienoate + oxidized [NADPH--hemoprotein reductase] + H2O + H(+). It carries out the reaction (5Z,8Z,11Z,14Z)-eicosatetraenoate + reduced [NADPH--hemoprotein reductase] + O2 = (14S,15R)-epoxy-(5Z,8Z,11Z)-eicosatrienoate + oxidized [NADPH--hemoprotein reductase] + H2O + H(+). The enzyme catalyses (5Z,8Z,11Z,14Z,17Z)-eicosapentaenoate + reduced [NADPH--hemoprotein reductase] + O2 = 8,9-epoxy-(5Z,11Z,14Z,17Z)-eicosatetraenoate + oxidized [NADPH--hemoprotein reductase] + H2O + H(+). It catalyses the reaction (5Z,8Z,11Z,14Z,17Z)-eicosapentaenoate + reduced [NADPH--hemoprotein reductase] + O2 = 11,12-epoxy-(5Z,8Z,14Z,17Z)-eicosatetraenoate + oxidized [NADPH--hemoprotein reductase] + H2O + H(+). The catalysed reaction is (5Z,8Z,11Z,14Z,17Z)-eicosapentaenoate + reduced [NADPH--hemoprotein reductase] + O2 = 14,15-epoxy-(5Z,8Z,11Z,17Z)-eicosatetraenoate + oxidized [NADPH--hemoprotein reductase] + H2O + H(+). It carries out the reaction (5Z,8Z,11Z,14Z,17Z)-eicosapentaenoate + reduced [NADPH--hemoprotein reductase] + O2 = (17S,18R)-epoxy-(5Z,8Z,11Z,14Z)-eicosatetraenoate + oxidized [NADPH--hemoprotein reductase] + H2O + H(+). The enzyme catalyses (5Z,8Z,11Z,14Z,17Z)-eicosapentaenoate + reduced [NADPH--hemoprotein reductase] + O2 = (17R,18S)-epoxy-(5Z,8Z,11Z,14Z)-eicosatetraenoate + oxidized [NADPH--hemoprotein reductase] + H2O + H(+). Its pathway is lipid metabolism; arachidonate metabolism. It participates in steroid metabolism. In terms of biological role, a cytochrome P450 monooxygenase involved in the metabolism of steroid hormones and fatty acids. Catalyzes the hydroxylation of carbon-hydrogen bonds. Metabolizes testosterone to 2alpha- and 16alpha-hydroxytestosterone. Catalyzes the epoxidation of double bonds of polyunsaturated fatty acids (PUFAs). Converts arachidonic acid (ARA, C20:4(n-6)) primarily to epoxyeicosatrienoic acid (EET) regioisomers, 8,9-, 11,12-, and 14,15-EET, with both R,S and S,R stereochemistry. Preferentially produces 11R,12S-EET enantiomer. To a lesser extent, catalyzes the hydroxylation of arachidonic acid producing hydroxyeicosatetraenoates (HETEs). Metabolizes eicosapentaenoic acid (EPA, C20:5(n-3)) to epoxyeicosatetraenoic acid (EETeTr) regioisomers, 8,9-, 11,12-, 14,15-, and 17,18-EETeTr, preferentially producing 17R,18S-EETeTr enantiomer. Mechanistically, uses molecular oxygen inserting one oxygen atom into a substrate, and reducing the second into a water molecule, with two electrons provided by NADPH via cytochrome P450 reductase (NADPH--hemoprotein reductase). This Rattus norvegicus (Rat) protein is Cytochrome P450 2C11 (Cyp2c11).